A 231-amino-acid polypeptide reads, in one-letter code: NADH-ubiquinone oxidoreductase chain 4 (231 aa).

Helical transmembrane passes span 1-21 (PIAGSMVLAAILLKLGGYGII), 34-54 (LFIPFIVLALWGATLANLTCL), 61-80 (SLIAYSSISHMGLVVAAVII), 84-106 (WGLSGAMALMIAHGFTSSALFCL), 118-138 (ILILTRGFHNILPMATTWWLL), 156-176 (LLIVSTLFNWCPTTIIMLGLS), and 211-231 (LLMILHIIPLLMISMKPELVI).

This sequence belongs to the complex I subunit 4 family.

It is found in the mitochondrion membrane. The enzyme catalyses a ubiquinone + NADH + 5 H(+)(in) = a ubiquinol + NAD(+) + 4 H(+)(out). Functionally, core subunit of the mitochondrial membrane respiratory chain NADH dehydrogenase (Complex I) that is believed to belong to the minimal assembly required for catalysis. Complex I functions in the transfer of electrons from NADH to the respiratory chain. The immediate electron acceptor for the enzyme is believed to be ubiquinone. The polypeptide is NADH-ubiquinone oxidoreductase chain 4 (MT-ND4) (Hypnale hypnale (Merrem's hump-nosed viper)).